The sequence spans 367 residues: Alginate lyase (367 aa).

The N-terminal stretch at 1-24 (MTIFKRISSPALLALALFGGAAHA) is a signal peptide. Substrate-binding positions include 63–64 (SK), 136–137 (HT), and Tyr-254.

It belongs to the polysaccharide lyase 5 family.

The protein localises to the periplasm. The catalysed reaction is Eliminative cleavage of alginate to give oligosaccharides with 4-deoxy-alpha-L-erythro-hex-4-enuronosyl groups at their non-reducing ends and beta-D-mannuronate at their reducing end.. Catalyzes the depolymerization of alginate by cleaving the beta-1,4 glycosidic bond between two adjacent sugar residues via a beta-elimination mechanism. May serve to degrade mislocalized alginate that is trapped in the periplasmic space. This Pseudomonas putida (strain ATCC 700007 / DSM 6899 / JCM 31910 / BCRC 17059 / LMG 24140 / F1) protein is Alginate lyase.